A 74-amino-acid polypeptide reads, in one-letter code: DNA-directed RNA polymerase subunit omega (74 aa).

This sequence belongs to the RNA polymerase subunit omega family. As to quaternary structure, the RNAP catalytic core consists of 2 alpha, 1 beta, 1 beta' and 1 omega subunit. When a sigma factor is associated with the core the holoenzyme is formed, which can initiate transcription.

It catalyses the reaction RNA(n) + a ribonucleoside 5'-triphosphate = RNA(n+1) + diphosphate. In terms of biological role, promotes RNA polymerase assembly. Latches the N- and C-terminal regions of the beta' subunit thereby facilitating its interaction with the beta and alpha subunits. In Helicobacter pylori (strain P12), this protein is DNA-directed RNA polymerase subunit omega.